Consider the following 383-residue polypeptide: 4-hydroxy-3-methylbut-2-en-1-yl diphosphate synthase (flavodoxin) (383 aa).

[4Fe-4S] cluster contacts are provided by Cys-275, Cys-278, Cys-310, and Glu-317.

The protein belongs to the IspG family. Requires [4Fe-4S] cluster as cofactor.

It carries out the reaction (2E)-4-hydroxy-3-methylbut-2-enyl diphosphate + oxidized [flavodoxin] + H2O + 2 H(+) = 2-C-methyl-D-erythritol 2,4-cyclic diphosphate + reduced [flavodoxin]. Its pathway is isoprenoid biosynthesis; isopentenyl diphosphate biosynthesis via DXP pathway; isopentenyl diphosphate from 1-deoxy-D-xylulose 5-phosphate: step 5/6. Functionally, converts 2C-methyl-D-erythritol 2,4-cyclodiphosphate (ME-2,4cPP) into 1-hydroxy-2-methyl-2-(E)-butenyl 4-diphosphate. The chain is 4-hydroxy-3-methylbut-2-en-1-yl diphosphate synthase (flavodoxin) from Dinoroseobacter shibae (strain DSM 16493 / NCIMB 14021 / DFL 12).